The chain runs to 359 residues: Type-1 angiotensin II receptor (359 aa).

Topologically, residues 1–25 (MVPNYSTEETVKRIHVDCPVSGRHS) are extracellular. N4 carries an N-linked (GlcNAc...) asparagine glycan. Residue D17 coordinates angiotensin II. 2 cysteine pairs are disulfide-bonded: C18-C274 and C101-C180. A helical transmembrane segment spans residues 26 to 55 (YIYIMVPTVYSIIFIIGIFGNSLVVIVIYC). Residues 56–61 (YMKLKT) lie on the Cytoplasmic side of the membrane. Residues 62 to 89 (VASIFLLNLALADLCFLITLPLWAAYTA) traverse the membrane as a helical segment. Topologically, residues 90–98 (MEYQWPFGN) are extracellular. Residues 99–125 (CLCKLASAGISFNLYASVFLLTCLSID) form a helical membrane-spanning segment. Residues 126 to 141 (RYLAIVHPVKSRIRRT) lie on the Cytoplasmic side of the membrane. A helical transmembrane segment spans residues 142–165 (MFVARVTCIVIWLLAGVASLPVII). The Extracellular portion of the chain corresponds to 166–190 (HRNIFFAENLNMTVCGFRYDNNNTT). R167 is a binding site for angiotensin II. N-linked (GlcNAc...) asparagine glycosylation occurs at N176. Angiotensin II contacts are provided by F182 and Y184. N187 and N188 each carry an N-linked (GlcNAc...) asparagine glycan. The helical transmembrane segment at 191-216 (LRVGLGLSKNLLGFLIPFLIILTSYT) threads the bilayer. Angiotensin II is bound at residue K199. Residues 217 to 239 (LIWKTLKKAYQIQRNKTRNDDIF) are Cytoplasmic-facing. A helical membrane pass occupies residues 240–268 (KMIVAIVFFFFFSWIPHQVFTFLDVLIQL). Over 269–278 (HVITDCKITD) the chain is Extracellular. The helical transmembrane segment at 279-304 (IVDTAMPFTICIAYFNNCLNPFFYVF) threads the bilayer. The Cytoplasmic portion of the chain corresponds to 305–359 (FGKNFKKYFLQLIKYIPPNVSTHPSLTTKMSSLSYRPPENIRLPTKKTAGSFDAE).

This sequence belongs to the G-protein coupled receptor 1 family. Post-translationally, C-terminal Ser or Thr residues may be phosphorylated.

It is found in the cell membrane. Receptor for angiotensin II, a vasoconstricting peptide, which acts as a key regulator of blood pressure and sodium retention by the kidney. The activated receptor in turn couples to G-alpha proteins G(q) (GNAQ, GNA11, GNA14 or GNA15) and thus activates phospholipase C and increases the cytosolic Ca(2+) concentrations, which in turn triggers cellular responses such as stimulation of protein kinase C. This is Type-1 angiotensin II receptor (AGTR1) from Gallus gallus (Chicken).